We begin with the raw amino-acid sequence, 328 residues long: Probable cell division protein WhiA (328 aa).

The H-T-H motif DNA-binding region spans 275–308 (SLEELGQLHDPVLTKDAIAGRIRRLLAMADKRAE).

This sequence belongs to the WhiA family.

In terms of biological role, involved in cell division and chromosome segregation. The chain is Probable cell division protein WhiA from Nocardioides sp. (strain ATCC BAA-499 / JS614).